Reading from the N-terminus, the 289-residue chain is Glycine-rich RNA-binding protein 5, mitochondrial (289 aa).

Residues 1 to 31 constitute a mitochondrion transit peptide; that stretch reads MAFLSKVGRLFSQTSSHVTASSSMLQSIRCM. The region spanning 34–111 is the RRM domain; sequence SKIFVGGISY…RRIRVNYATE (78 aa). The segment at 219 to 289 is disordered; it reads QGSSTNAGFD…TDDGDVAKRA (71 aa). The segment covering 257–272 has biased composition (polar residues); it reads GSDNQFGDAENGNTEN.

It belongs to the GR-RBP family. In terms of assembly, homodimer. Interacts with MORF8/RIP1 AND RBG3/ORRM3. Binds to RBG2/ORRM5.

The protein localises to the mitochondrion. Possibly has a role in RNA transcription or processing during stress. Binds RNAs and DNAs sequence with a preference to single-stranded nucleic acids. Displays strong affinity to poly(U) sequence. Involved in C-to-U editing of mitochondrial RNA. Functions as a major mitochondrial editing factor. Controls 44 percent of the mitochondrial editing sites. The chain is Glycine-rich RNA-binding protein 5, mitochondrial from Arabidopsis thaliana (Mouse-ear cress).